Consider the following 310-residue polypeptide: Cytosolic Fe-S cluster assembly factor NUBP1 homolog (310 aa).

4 residues coordinate [4Fe-4S] cluster: Cys12, Cys26, Cys29, and Cys35. 66–73 (GKGGVGKS) contacts ATP. Residues Cys240 and Cys243 each contribute to the [4Fe-4S] cluster site.

This sequence belongs to the Mrp/NBP35 ATP-binding proteins family. NUBP1/NBP35 subfamily. In terms of assembly, heterotetramer of 2 NUBP1 and 2 NUBP2 chains. The cofactor is [4Fe-4S] cluster.

The protein localises to the cytoplasm. In terms of biological role, component of the cytosolic iron-sulfur (Fe/S) protein assembly (CIA) machinery. Required for maturation of extramitochondrial Fe-S proteins. The NUBP1-NUBP2 heterotetramer forms a Fe-S scaffold complex, mediating the de novo assembly of an Fe-S cluster and its transfer to target apoproteins. The protein is Cytosolic Fe-S cluster assembly factor NUBP1 homolog of Brugia malayi (Filarial nematode worm).